The following is a 298-amino-acid chain: MPTRMITKDEVTLWSEGIGDPADAPLLLIAGGNLSARSWPDEFVERLAAAGHFVIRYDHRDTGRSSRYDFALHPYGFDELATDALAVLDAWQVRAAHVVGMSLGNTIGQLLALDAPERLLTLTVMLGGALDVDFDADLEAALKGEPSVSGLPVPSRRFLDMMMLLQQPAGTDEELLERRVEKWRLLNGEGVPFDSDEFRRRELLAAGHAGTFDEPIVHHMIPQPPVSRGAELARITTPVLAIQAMCDPAAPPPHARHLADRIPGARVVEIENMGHALPLAVHEPLAAAICAHTRAATV.

Residues 25–277 (PLLLIAGGNL…VEIENMGHAL (253 aa)) enclose the AB hydrolase-1 domain.

The protein belongs to the methyl esterase DnrP family.

The enzyme catalyses rhodomycin D + H2O = 10-carboxy-13-deoxycarminomycin + methanol + H(+). It catalyses the reaction 4-O-methylrhodomycin D + H2O = 10-carboxy-13-deoxydaunorubicin + methanol + H(+). It participates in antibiotic biosynthesis; daunorubicin biosynthesis. It functions in the pathway antibiotic biosynthesis; carminomycin biosynthesis. Functionally, involved in the biosynthesis of the anthracyclines carminomycin and daunorubicin (daunomycin) which are aromatic polyketide antibiotics that exhibit high cytotoxicity and are widely applied in the chemotherapy of a variety of cancers. Catalyzes the removal of methyl group from the carbomethoxy group of rhodomycin D (10-carbomethoxy-13-deoxycarminomycin) and 4-O-methylrhodomycin D to yield 10-carboxy-13-deoxycarminomycin and 10-carboxy-13-deoxydaunorubicin, respectively. Could be also involved in the decarboxylation of 10-carboxy-13-deoxycarminomycin and 10-carboxy-13-deoxydaunorubicin to yield 13-deoxycarminomycin and 13-deoxydaunorubicin, respectively. It seems that DauK may influence the ability of DauP to carry out the decarboxylation. The chain is Rhodomycin D methylesterase DauP (dauP) from Streptomyces sp. (strain C5).